We begin with the raw amino-acid sequence, 510 residues long: Indoleacetate--CoA ligase (510 aa).

The protein belongs to the ATP-dependent AMP-binding enzyme family. Monomer.

The enzyme catalyses (indol-3-yl)acetate + ATP + CoA = (indol-3-yl)acetyl-CoA + AMP + diphosphate. It catalyses the reaction (indol-3-yl)acetate + ATP + H(+) = (indol-3-yl)acetyl-AMP + diphosphate. The catalysed reaction is (indol-3-yl)acetyl-AMP + CoA = (indol-3-yl)acetyl-CoA + AMP + H(+). With respect to regulation, inhibited by high concentrations of substrates, and by the synthetic auxin compound 2,4-dichlorophenoxyacetate (2,4-D), which does not serve as substrate. Involved in degradation of indoleacetate, the most common member of the auxin class of plant hormones. Highly specific indoleacetate-CoA ligase which catalyzes the ATP-dependent activation of indoleacetate (IAA) to indoleacetyl-CoA. Also activates some closely related compounds such as the non-physiological compound (2-naphthyl)acetate and phenylacetate, which seems to be a fortuitous substrate for IaaB. The sequence is that of Indoleacetate--CoA ligase from Aromatoleum aromaticum (strain DSM 19018 / LMG 30748 / EbN1) (Azoarcus sp. (strain EbN1)).